We begin with the raw amino-acid sequence, 72 residues long: Protein SlyX homolog (72 aa).

This sequence belongs to the SlyX family.

The sequence is that of Protein SlyX homolog from Bradyrhizobium diazoefficiens (strain JCM 10833 / BCRC 13528 / IAM 13628 / NBRC 14792 / USDA 110).